The sequence spans 518 residues: Nicotine N-demethylase CYP82E3 (518 aa).

Residues 2-22 (VFPVEAIVGLVTFTFLFYFLW) form a helical membrane-spanning segment. A Glycyl lysine isopeptide (Lys-Gly) (interchain with G-Cter in ubiquitin) cross-link involves residue Lys254. Cys458 serves as a coordination point for heme.

Belongs to the cytochrome P450 family. CYP82E2 subfamily. Heme serves as cofactor. As to expression, expressed in leaves.

Its subcellular location is the membrane. It catalyses the reaction (S)-nicotine + reduced [NADPH--hemoprotein reductase] + O2 = (S)-nornicotine + formaldehyde + oxidized [NADPH--hemoprotein reductase] + H2O + H(+). Its pathway is alkaloid biosynthesis; nicotine biosynthesis. Involved in the biosynthesis of pyridine alkaloid natural products, leading mainly to the production of anabasine, anatabine, nicotine and nornicotine, effective deterrents against herbivores with antiparasitic and pesticide properties (neurotoxins); nornicotine serves as the precursor in the synthesis of the carcinogen compound N'-nitrosonornicotine (NNN). Catalyzes the demethylation of nicotine to form nornicotine. This chain is Nicotine N-demethylase CYP82E3, found in Nicotiana tomentosiformis (Tobacco).